The chain runs to 206 residues: MELKLLNANGQEGAGVSASDVVFGRDYNEALIHQVVVAYQANARSGNRAQKDREQVKHTTKKPWRQKGTGRARAGMSSSPLWRGGGRIFPNSPEENFSHKVNKKMHRAGLCSIFSQLAREGRISVVDELTLEAPKTKLLAEKFKAMGLDSVLVITDTVDENLYLASRNLAHVAVVEPRYADPLSLIYFKKILITKAAVAQIEELLS.

The interval 44–78 is disordered; sequence RSGNRAQKDREQVKHTTKKPWRQKGTGRARAGMSS. Residues 58–70 show a composition bias toward basic residues; sequence HTTKKPWRQKGTG.

It belongs to the universal ribosomal protein uL4 family. In terms of assembly, part of the 50S ribosomal subunit.

In terms of biological role, one of the primary rRNA binding proteins, this protein initially binds near the 5'-end of the 23S rRNA. It is important during the early stages of 50S assembly. It makes multiple contacts with different domains of the 23S rRNA in the assembled 50S subunit and ribosome. Forms part of the polypeptide exit tunnel. The polypeptide is Large ribosomal subunit protein uL4 (Paraburkholderia phytofirmans (strain DSM 17436 / LMG 22146 / PsJN) (Burkholderia phytofirmans)).